The primary structure comprises 124 residues: Small ribosomal subunit protein uS12 (124 aa).

3-methylthioaspartic acid is present on aspartate 89.

It belongs to the universal ribosomal protein uS12 family. As to quaternary structure, part of the 30S ribosomal subunit. Contacts proteins S8 and S17. May interact with IF1 in the 30S initiation complex.

In terms of biological role, with S4 and S5 plays an important role in translational accuracy. Functionally, interacts with and stabilizes bases of the 16S rRNA that are involved in tRNA selection in the A site and with the mRNA backbone. Located at the interface of the 30S and 50S subunits, it traverses the body of the 30S subunit contacting proteins on the other side and probably holding the rRNA structure together. The combined cluster of proteins S8, S12 and S17 appears to hold together the shoulder and platform of the 30S subunit. This Edwardsiella ictaluri (strain 93-146) protein is Small ribosomal subunit protein uS12.